The sequence spans 405 residues: uncharacterized protein (405 aa).

12 helical membrane-spanning segments follow: residues 19–39 (IVSIVMFNFASYLTIGLPLAV), 47–67 (VMGFSAFWAGLVISLQYFATL), 85–105 (IVVFGLCGCFLSGLGYLTAGL), 107–127 (ASLPVISLLLLCLGRVILGIG), 156–176 (GIVTYGAMAMGAPLGVVFYHW), 178–198 (GLQALALIIMGVALVAILLAI), 224–244 (GMALALASAGFGVIATFITLF), 252–272 (GAAFALTLFSCAFVGTRLLFP), 283–303 (VAMICFSVEIIGLLLVGVATM), 309–329 (IGVLLAGAGFSLVFPALGVVA), 344–364 (TYTVFMDLSLGVTGPLAGLVM), and 366–386 (WAGVPVIYLAAAGLVAIALLL).

This sequence belongs to the major facilitator superfamily. YhhS family.

Its subcellular location is the cell inner membrane. This is an uncharacterized protein from Escherichia coli O6:H1 (strain CFT073 / ATCC 700928 / UPEC).